Here is a 120-residue protein sequence, read N- to C-terminus: Crustacean hyperglycemic hormones 4 (120 aa).

Residues 1-26 form the signal peptide; that stretch reads MVALNTLSAVSAALLVLAASPSPASA. 3 cysteine pairs are disulfide-bonded: Cys-53/Cys-89, Cys-69/Cys-85, and Cys-72/Cys-98. Residue Val-118 is modified to Valine amide.

This sequence belongs to the arthropod CHH/MIH/GIH/VIH hormone family.

The protein resides in the secreted. Its function is as follows. Hormone found in the sinus gland of isopods and decapods which controls the blood sugar level. Has a secretagogue action over the amylase released from the midgut gland. May act as a stress hormone and may be involved in the control of molting and reproduction. This chain is Crustacean hyperglycemic hormones 4 (CHH4), found in Penaeus monodon (Giant tiger prawn).